The sequence spans 426 residues: Formate-dependent phosphoribosylglycinamide formyltransferase (426 aa).

Residues 26–27 (EL) and Glu86 contribute to the N(1)-(5-phospho-beta-D-ribosyl)glycinamide site. Residues Arg118, Lys158, 197 to 200 (EEFI), and Glu205 each bind ATP. One can recognise an ATP-grasp domain in the interval 123 to 324 (EAIASTGART…EFALHAKAVL (202 aa)). Residues Glu279 and Glu293 each contribute to the Mg(2+) site. N(1)-(5-phospho-beta-D-ribosyl)glycinamide-binding positions include Asp300, Lys374, and 381–382 (RR).

The protein belongs to the PurK/PurT family. Homodimer.

The enzyme catalyses N(1)-(5-phospho-beta-D-ribosyl)glycinamide + formate + ATP = N(2)-formyl-N(1)-(5-phospho-beta-D-ribosyl)glycinamide + ADP + phosphate + H(+). It functions in the pathway purine metabolism; IMP biosynthesis via de novo pathway; N(2)-formyl-N(1)-(5-phospho-D-ribosyl)glycinamide from N(1)-(5-phospho-D-ribosyl)glycinamide (formate route): step 1/1. In terms of biological role, involved in the de novo purine biosynthesis. Catalyzes the transfer of formate to 5-phospho-ribosyl-glycinamide (GAR), producing 5-phospho-ribosyl-N-formylglycinamide (FGAR). Formate is provided by PurU via hydrolysis of 10-formyl-tetrahydrofolate. This chain is Formate-dependent phosphoribosylglycinamide formyltransferase, found in Methanocella arvoryzae (strain DSM 22066 / NBRC 105507 / MRE50).